We begin with the raw amino-acid sequence, 643 residues long: Tigger transposable element-derived protein 5 (643 aa).

Residues 1–50 (MYSAGPPAVPAPRRCRRPPPGRPMQPPRPPAPAPVPAARPPPPAPGPRPR) form a disordered region. The segment covering 20–48 (PGRPMQPPRPPAPAPVPAARPPPPAPGPR) has biased composition (pro residues). Positions 52-103 (AVKMAFRKAYSIKDKLQAIERVKGGERQASVCRDFGVPGGTLRGWLKDEPKL) constitute an HTH psq-type domain. 2 consecutive DNA-binding regions (H-T-H motif) follow at residues 79-99 (QASV…WLKD) and 150-183 (PLIQ…WQKR). Positions 117–190 (QRKKMRLANE…QKRHGISSQR (74 aa)) constitute an HTH CENPB-type domain. Residues 197 to 236 (PVAAGPAPGPPVKQEPAQPTRAGPLPDRAASTPAPAEGGY) form a disordered region. Positions 238–358 (DEQIYNANVT…LQQKAVLLVA (121 aa)) constitute a DDE-1 domain. A disordered region spans residues 366–395 (EARMPALEESEETRRRCRPEPTGPPEELQT).

The protein belongs to the tigger transposable element derived protein family.

Its subcellular location is the nucleus. The polypeptide is Tigger transposable element-derived protein 5 (TIGD5) (Bos taurus (Bovine)).